The chain runs to 309 residues: Carbamate kinase 3 (309 aa).

It belongs to the carbamate kinase family.

Its subcellular location is the cytoplasm. The catalysed reaction is hydrogencarbonate + NH4(+) + ATP = carbamoyl phosphate + ADP + H2O + H(+). Its pathway is metabolic intermediate metabolism; carbamoyl phosphate degradation; CO(2) and NH(3) from carbamoyl phosphate: step 1/1. The polypeptide is Carbamate kinase 3 (arcC3) (Staphylococcus aureus (strain USA300)).